We begin with the raw amino-acid sequence, 87 residues long: Small ribosomal subunit protein bS20 (87 aa).

The span at methionine 1–leucine 19 shows a compositional bias: basic residues. Positions methionine 1–asparagine 22 are disordered.

It belongs to the bacterial ribosomal protein bS20 family.

In terms of biological role, binds directly to 16S ribosomal RNA. The protein is Small ribosomal subunit protein bS20 of Maridesulfovibrio salexigens (strain ATCC 14822 / DSM 2638 / NCIMB 8403 / VKM B-1763) (Desulfovibrio salexigens).